Reading from the N-terminus, the 111-residue chain is Putative protein p34 (111 aa).

The sequence is that of Putative protein p34 (34) from Acyrthosiphon pisum secondary endosymbiont phage 1 (Bacteriophage APSE-1).